The chain runs to 277 residues: F420-dependent methylenetetrahydromethanopterin dehydrogenase (277 aa).

This sequence belongs to the MTD family.

The catalysed reaction is 5,10-methylenetetrahydromethanopterin + oxidized coenzyme F420-(gamma-L-Glu)(n) + 2 H(+) = 5,10-methenyl-5,6,7,8-tetrahydromethanopterin + reduced coenzyme F420-(gamma-L-Glu)(n). The protein operates within one-carbon metabolism; methanogenesis from CO(2); 5,10-methylene-5,6,7,8-tetrahydromethanopterin from 5,10-methenyl-5,6,7,8-tetrahydromethanopterin (coenzyme F420 route): step 1/1. Its function is as follows. Catalyzes the reversible reduction of methenyl-H(4)MPT(+) to methylene-H(4)MPT. This Methanococcus maripaludis (strain C7 / ATCC BAA-1331) protein is F420-dependent methylenetetrahydromethanopterin dehydrogenase.